The chain runs to 604 residues: Prostaglandin G/H synthase 2 (604 aa).

A signal peptide spans 1-17 (MLARALLLCAVLALSHT). The EGF-like domain occupies 18–55 (ANPCCSHPCQNRGVCMSVGFDQYKCDCTRTGFYGENCS). Cystine bridges form between Cys21-Cys32, Cys22-Cys145, Cys26-Cys42, and Cys44-Cys54. The N-linked (GlcNAc...) asparagine glycan is linked to Asn53. Substrate is bound at residue Arg106. An N-linked (GlcNAc...) asparagine glycan is attached at Asn130. His193 functions as the Proton acceptor in the catalytic mechanism. Residue Tyr341 coordinates substrate. The For cyclooxygenase activity role is filled by Tyr371. His374 is a binding site for heme b. N-linked (GlcNAc...) asparagine glycosylation occurs at Asn396. Residue Cys526 is modified to S-nitrosocysteine. Cys555 and Cys561 are disulfide-bonded. Position 565 is an O-acetylserine (Ser565). Asn580 is a glycosylation site (N-linked (GlcNAc...) asparagine).

Belongs to the prostaglandin G/H synthase family. Homodimer. The cofactor is heme b. Post-translationally, S-nitrosylation by NOS2 (iNOS) activates enzyme activity. S-nitrosylation may take place on different Cys residues in addition to Cys-526. In terms of processing, acetylated at Ser-565 by SPHK1. During neuroinflammation, acetylation by SPHK1 promotes neuronal secretion of specialized preresolving mediators (SPMs), especially 15-R-lipoxin A4, which results in an increase of phagocytic microglia.

It is found in the microsome membrane. Its subcellular location is the endoplasmic reticulum membrane. The protein resides in the nucleus inner membrane. It localises to the nucleus outer membrane. The catalysed reaction is (5Z,8Z,11Z,14Z)-eicosatetraenoate + AH2 + 2 O2 = prostaglandin H2 + A + H2O. It catalyses the reaction (5Z,8Z,11Z,14Z)-eicosatetraenoate + 2 O2 = prostaglandin G2. It carries out the reaction prostaglandin G2 + AH2 = prostaglandin H2 + A + H2O. The enzyme catalyses (5Z,8Z,11Z,14Z,17Z)-eicosapentaenoate + 2 O2 = prostaglandin G3. The catalysed reaction is prostaglandin G3 + AH2 = prostaglandin H3 + A + H2O. It catalyses the reaction (8Z,11Z,14Z)-eicosatrienoate + 2 O2 = prostaglandin G1. It carries out the reaction prostaglandin G1 + AH2 = prostaglandin H1 + A + H2O. The enzyme catalyses 2-(5Z,8Z,11Z,14Z)-eicosatetraenoyl-sn-glycero-3-phosphoethanolamine + 2 O2 = 2-(prostaglandin G2)-sn-glycero-3-phosphoethanolamine. The catalysed reaction is 2-(prostaglandin G2)-sn-glycero-3-phosphoethanolamine + AH2 = 2-(prostaglandin H2)-sn-glycero-3-phosphoethanolamine + A + H2O. It catalyses the reaction 2-(5Z,8Z,11Z,14Z)-eicosatetraenoyl-sn-glycero-3-phosphocholine + 2 O2 = 2-(prostaglandin G2)-sn-glycero-3-phosphocholine. It carries out the reaction 2-(prostaglandin G2)-sn-glycero-3-phosphocholine + AH2 = 2-(prostaglandin H2)-sn-glycero-3-phosphocholine + A + H2O. The enzyme catalyses (15S)-hydroperoxy-(5Z,8Z,11Z,13E)-eicosatetraenoate + AH2 = (15S)-hydroxy-(5Z,8Z,11Z,13E)-eicosatetraenoate + A + H2O. The catalysed reaction is 2-(5Z,8Z,11Z,14Z)-eicosatetraenoyl-sn-glycero-3-phosphocholine + AH2 + O2 = 2-[(15S)-hydroxy-(5Z,8Z,11Z,13E)-eicosatetraenoyl]-sn-glycero-3-phosphocholine + A + H2O. It catalyses the reaction 2-(5Z,8Z,11Z,14Z)-eicosatetraenoyl-sn-glycero-3-phosphocholine + AH2 + O2 = 2-[(15R)-hydroxy-(5Z,8Z,11Z,13E)-eicosatetraenoyl]-sn-glycero-3-phosphocholine + A + H2O. It carries out the reaction 2-(5Z,8Z,11Z,14Z)-eicosatetraenoyl-sn-glycero-3-phosphocholine + AH2 + O2 = 2-[(11R)-hydroxy-(5Z,8Z,12E,14Z)-eicosatetraenoyl]-sn-glycero-3-phosphocholine + A + H2O. The enzyme catalyses (9Z,12Z)-octadecadienoate + AH2 + O2 = 9-hydroxy-(10E,12Z)-octadecadienoate + A + H2O. The catalysed reaction is (9Z,12Z)-octadecadienoate + AH2 + O2 = 13-hydroxy-(9Z,11E)-octadecadienoate + A + H2O. It catalyses the reaction (5Z,8Z,11Z,14Z)-eicosatetraenoate + AH2 + O2 = (15R)-hydroxy-(5Z,8Z,11Z,13E)-eicosatetraenoate + A + H2O. It carries out the reaction (5Z,8Z,11Z,14Z)-eicosatetraenoate + AH2 + O2 = (11R)-hydroxy-(5Z,8Z,12E,14Z)-eicosatetraenoate + A + H2O. The enzyme catalyses (5Z,8Z,11Z,14Z,17Z)-eicosapentaenoate + AH2 + O2 = (11R)-hydroxy-(5Z,8Z,12E,14Z,17Z)-eicosapentaenoate + A + H2O. The catalysed reaction is (5Z,8Z,11Z,14Z,17Z)-eicosapentaenoate + AH2 + O2 = (18S)-hydroxy-(5Z,8Z,11Z,14Z,16E)-eicosapentaenoate + A + H2O. It catalyses the reaction (5Z,8Z,11Z,14Z,17Z)-eicosapentaenoate + AH2 + O2 = (18R)-hydroxy-(5Z,8Z,11Z,14Z,16E)-eicosapentaenoate + A + H2O. It carries out the reaction (5Z,8Z,11Z,14Z,17Z)-eicosapentaenoate + AH2 + O2 = (15R)-hydroxy-(5Z,8Z,11Z,13E,17Z)-eicosapentaenoate + A + H2O. The enzyme catalyses (5Z,8Z,11Z,14Z,17Z)-eicosapentaenoate + AH2 + O2 = (15S)-hydroxy-(5Z,8Z,11Z,13E,17Z)-eicosapentaenoate + A + H2O. The catalysed reaction is (7Z,10Z,13Z,16Z,19Z)-docosapentaenoate + AH2 + O2 = 13R-hydroxy-(7Z,10Z,14E,16Z,19Z)-docosapentaenoate + A + H2O. It catalyses the reaction (4Z,7Z,10Z,13Z,16Z,19Z)-docosahexaenoate + AH2 + O2 = 13-hydroxy-(4Z,7Z,10Z,14E,16Z,19Z)-docosahexaenoate + A + H2O. It carries out the reaction (5S)-hydroxy-(6E,8Z,11Z,14Z)-eicosatetraenoate + AH2 + O2 = (5S,15R)-dihydroxy-(6E,8Z,11Z,13E)-eicosatetraenoate + A + H2O. The enzyme catalyses (4Z,7Z,10Z,13Z,16Z,19Z)-docosahexaenoate + AH2 + O2 = 17R-hydroxy-(4Z,7Z,10Z,13Z,15E,19Z)-docosahexaenoate + A + H2O. The catalysed reaction is (5S)-hydroxy-(6E,8Z,11Z,14Z)-eicosatetraenoate + AH2 + O2 = (5S,15S)-dihydroxy-(6E,8Z,11Z,13E)-eicosatetraenoate + A + H2O. It catalyses the reaction (5S)-hydroxy-(6E,8Z,11Z,14Z)-eicosatetraenoate + AH2 + O2 = (5S,11R)-dihydroxy-(6E,8Z,12E,14Z)-eicosatetraenoate + A + H2O. It carries out the reaction 2-(5Z,8Z,11Z,14Z-eicosatetraenoyl)-glycerol + 2 O2 = 2-glyceryl-prostaglandin G2. The enzyme catalyses 2-glyceryl-prostaglandin G2 + AH2 = 2-glyceryl-prostaglandin H2 + A + H2O. The catalysed reaction is (5Z,8Z,11Z,14Z)-eicosatetraenoate + O2 = (15R)-hydroperoxy-(5Z,8Z,11Z,13E)-eicosatetraenoate. It catalyses the reaction (5Z,8Z,11Z,14Z)-eicosatetraenoate + O2 = 11R-hydroperoxy-(5Z,8Z,12E,14Z)-eicosatetraenoate. It carries out the reaction (9Z,12Z)-octadecadienoate + AH2 + O2 = (9R)-hydroxy-(10E,12Z)-octadecadienoate + A + H2O. The enzyme catalyses (9Z,12Z)-octadecadienoate + AH2 + O2 = (9S)-hydroxy-(10E,12Z)-octadecadienoate + A + H2O. The catalysed reaction is (9Z,12Z)-octadecadienoate + AH2 + O2 = (13S)-hydroxy-(9Z,11E)-octadecadienoate + A + H2O. It catalyses the reaction (9Z,12Z)-octadecadienoate + AH2 + O2 = (13R)-hydroxy-(9Z,11E)-octadecadienoate + A + H2O. Its pathway is lipid metabolism; prostaglandin biosynthesis. The cyclooxygenase activity is inhibited by nonsteroidal anti-inflammatory drugs (NSAIDs) including aspirin, ibuprofen, flurbiprofen, celecoxib, flufenamic, mefenamic and tolfenamic acids as well as by hydroperoxide scavenger erythrocyte glutathione peroxidase GPX1. Aspirin triggers enzyme acetylation turning off its ability to generate pro-inflammatory prostaglandins, but switches on its capacity to produce anti-inflammatory lipid mediators involved in inflammation resolution. Aspirin enhances lipoxygenase-type activity toward production of epimers with R stereochemistry such as 15R-HETE, 18R-HEPE, 15R-HEPE and 17R-HDHA. Atorvastatin, a cholesterol-lowering drug, triggers enzyme S-nitrosylation increasing production of 13-series resolvins (RvTs). In terms of biological role, dual cyclooxygenase and peroxidase in the biosynthesis pathway of prostanoids, a class of C20 oxylipins mainly derived from arachidonate ((5Z,8Z,11Z,14Z)-eicosatetraenoate, AA, C20:4(n-6)), with a particular role in the inflammatory response. The cyclooxygenase activity oxygenates AA to the hydroperoxy endoperoxide prostaglandin G2 (PGG2), and the peroxidase activity reduces PGG2 to the hydroxy endoperoxide prostaglandin H2 (PGH2), the precursor of all 2-series prostaglandins and thromboxanes. This complex transformation is initiated by abstraction of hydrogen at carbon 13 (with S-stereochemistry), followed by insertion of molecular O2 to form the endoperoxide bridge between carbon 9 and 11 that defines prostaglandins. The insertion of a second molecule of O2 (bis-oxygenase activity) yields a hydroperoxy group in PGG2 that is then reduced to PGH2 by two electrons. Similarly catalyzes successive cyclooxygenation and peroxidation of dihomo-gamma-linoleate (DGLA, C20:3(n-6)) and eicosapentaenoate (EPA, C20:5(n-3)) to corresponding PGH1 and PGH3, the precursors of 1- and 3-series prostaglandins. In an alternative pathway of prostanoid biosynthesis, converts 2-arachidonoyl lysophopholipids to prostanoid lysophopholipids, which are then hydrolyzed by intracellular phospholipases to release free prostanoids. Metabolizes 2-arachidonoyl glycerol yielding the glyceryl ester of PGH2, a process that can contribute to pain response. Generates lipid mediators from n-3 and n-6 polyunsaturated fatty acids (PUFAs) via a lipoxygenase-type mechanism. Oxygenates PUFAs to hydroperoxy compounds and then reduces them to corresponding alcohols. Plays a role in the generation of resolution phase interaction products (resolvins) during both sterile and infectious inflammation. Metabolizes docosahexaenoate (DHA, C22:6(n-3)) to 17R-HDHA, a precursor of the D-series resolvins (RvDs). As a component of the biosynthetic pathway of E-series resolvins (RvEs), converts eicosapentaenoate (EPA, C20:5(n-3)) primarily to 18S-HEPE that is further metabolized by ALOX5 and LTA4H to generate 18S-RvE1 and 18S-RvE2. In vascular endothelial cells, converts docosapentaenoate (DPA, C22:5(n-3)) to 13R-HDPA, a precursor for 13-series resolvins (RvTs) shown to activate macrophage phagocytosis during bacterial infection. In activated leukocytes, contributes to oxygenation of hydroxyeicosatetraenoates (HETE) to diHETES (5,15-diHETE and 5,11-diHETE). Can also use linoleate (LA, (9Z,12Z)-octadecadienoate, C18:2(n-6)) as substrate and produce hydroxyoctadecadienoates (HODEs) in a regio- and stereospecific manner, being (9R)-HODE ((9R)-hydroxy-(10E,12Z)-octadecadienoate) and (13S)-HODE ((13S)-hydroxy-(9Z,11E)-octadecadienoate) its major products. During neuroinflammation, plays a role in neuronal secretion of specialized preresolving mediators (SPMs) 15R-lipoxin A4 that regulates phagocytic microglia. The polypeptide is Prostaglandin G/H synthase 2 (Homo sapiens (Human)).